Here is a 196-residue protein sequence, read N- to C-terminus: 3-isopropylmalate dehydratase small subunit (196 aa).

The protein belongs to the LeuD family. LeuD type 1 subfamily. As to quaternary structure, heterodimer of LeuC and LeuD.

It carries out the reaction (2R,3S)-3-isopropylmalate = (2S)-2-isopropylmalate. It functions in the pathway amino-acid biosynthesis; L-leucine biosynthesis; L-leucine from 3-methyl-2-oxobutanoate: step 2/4. Functionally, catalyzes the isomerization between 2-isopropylmalate and 3-isopropylmalate, via the formation of 2-isopropylmaleate. The polypeptide is 3-isopropylmalate dehydratase small subunit (Corynebacterium aurimucosum (strain ATCC 700975 / DSM 44827 / CIP 107346 / CN-1) (Corynebacterium nigricans)).